The chain runs to 134 residues: Thionin-2.1 (134 aa).

Residues 1 to 24 (MKGRILILSLLIMSLVMAQVQVEA) form the signal peptide. Disulfide bonds link Cys27–Cys61, Cys28–Cys55, and Cys40–Cys49. A propeptide spans 68–134 (AILENSADAT…VVPPGPPKLL (67 aa)) (acidic domain).

It belongs to the plant thionin (TC 1.C.44) family. Detected in rosette leaves and at a very high level in flowers and in siliques.

It localises to the secreted. Functionally, seems to function as a defense factor. Thionins are small plant proteins which are toxic to animal cells. They seem to exert their toxic effect at the level of the cell membrane. Their precise function is not known. The polypeptide is Thionin-2.1 (THI2.1) (Arabidopsis thaliana (Mouse-ear cress)).